A 236-amino-acid polypeptide reads, in one-letter code: tRNA (guanine-N(7)-)-methyltransferase (236 aa).

S-adenosyl-L-methionine contacts are provided by Asp35, Glu60, Asn87, and Asp113. Asp113 is an active-site residue. Residues Lys117 and Asp149 each contribute to the substrate site.

This sequence belongs to the class I-like SAM-binding methyltransferase superfamily. TrmB family.

It catalyses the reaction guanosine(46) in tRNA + S-adenosyl-L-methionine = N(7)-methylguanosine(46) in tRNA + S-adenosyl-L-homocysteine. The protein operates within tRNA modification; N(7)-methylguanine-tRNA biosynthesis. In terms of biological role, catalyzes the formation of N(7)-methylguanine at position 46 (m7G46) in tRNA. The chain is tRNA (guanine-N(7)-)-methyltransferase from Prochlorococcus marinus (strain MIT 9303).